We begin with the raw amino-acid sequence, 241 residues long: Thiamine import ATP-binding protein ThiQ (241 aa).

An ABC transporter domain is found at 7–235 (IRLSDVRFSY…AGPEALRHYI (229 aa)). 37–44 (GPSGSGKS) contributes to the ATP binding site.

This sequence belongs to the ABC transporter superfamily. Thiamine importer (TC 3.A.1.19.1) family. The complex is composed of two ATP-binding proteins (ThiQ), two transmembrane proteins (ThiP) and a solute-binding protein (ThiB).

It localises to the cell inner membrane. It carries out the reaction thiamine(out) + ATP + H2O = thiamine(in) + ADP + phosphate + H(+). Functionally, part of the ABC transporter complex ThiBPQ involved in thiamine import. Responsible for energy coupling to the transport system. The protein is Thiamine import ATP-binding protein ThiQ of Brucella abortus biovar 1 (strain 9-941).